Consider the following 215-residue polypeptide: tRNA (guanine-N(7)-)-methyltransferase (215 aa).

Positions 44, 69, 96, and 118 each coordinate S-adenosyl-L-methionine. Aspartate 118 is an active-site residue. Substrate is bound by residues lysine 122, aspartate 154, and threonine 191–glutamate 194.

It belongs to the class I-like SAM-binding methyltransferase superfamily. TrmB family.

It carries out the reaction guanosine(46) in tRNA + S-adenosyl-L-methionine = N(7)-methylguanosine(46) in tRNA + S-adenosyl-L-homocysteine. It functions in the pathway tRNA modification; N(7)-methylguanine-tRNA biosynthesis. Its function is as follows. Catalyzes the formation of N(7)-methylguanine at position 46 (m7G46) in tRNA. This chain is tRNA (guanine-N(7)-)-methyltransferase, found in Exiguobacterium sp. (strain ATCC BAA-1283 / AT1b).